Reading from the N-terminus, the 450-residue chain is Growth/differentiation factor 7 (450 aa).

The signal sequence occupies residues 1–19 (MDLSAAAALCLWLLSACRP). Residues 20–321 (RDGLEAAAVL…AVIGGRRRRR (302 aa)) constitute a propeptide that is removed on maturation. N-linked (GlcNAc...) asparagine glycosylation occurs at N83. The disordered stretch occupies residues 296–349 (ASEPLPDPGTGTASPRAVIGGRRRRRTALAGTRTAQGSGGGAGRGHGRRGRSRC). The span at 340-349 (GHGRRGRSRC) shows a compositional bias: basic residues. 3 disulfides stabilise this stretch: C349/C415, C378/C447, and C382/C449.

Belongs to the TGF-beta family. Homodimer; disulfide-linked.

It is found in the secreted. In terms of biological role, may play an active role in the motor area of the primate neocortex. The polypeptide is Growth/differentiation factor 7 (GDF7) (Homo sapiens (Human)).